The following is a 427-amino-acid chain: Glutamate-1-semialdehyde 2,1-aminomutase (427 aa).

K265 is modified (N6-(pyridoxal phosphate)lysine).

It belongs to the class-III pyridoxal-phosphate-dependent aminotransferase family. HemL subfamily. In terms of assembly, homodimer. Requires pyridoxal 5'-phosphate as cofactor.

Its subcellular location is the cytoplasm. It catalyses the reaction (S)-4-amino-5-oxopentanoate = 5-aminolevulinate. It functions in the pathway porphyrin-containing compound metabolism; protoporphyrin-IX biosynthesis; 5-aminolevulinate from L-glutamyl-tRNA(Glu): step 2/2. The chain is Glutamate-1-semialdehyde 2,1-aminomutase from Burkholderia pseudomallei (strain 668).